Consider the following 431-residue polypeptide: Serine hydroxymethyltransferase 3 (431 aa).

(6S)-5,6,7,8-tetrahydrofolate-binding positions include L131 and 135–137 (GHL). K240 is modified (N6-(pyridoxal phosphate)lysine).

It belongs to the SHMT family. As to quaternary structure, homodimer. Requires pyridoxal 5'-phosphate as cofactor.

Its subcellular location is the cytoplasm. It carries out the reaction (6R)-5,10-methylene-5,6,7,8-tetrahydrofolate + glycine + H2O = (6S)-5,6,7,8-tetrahydrofolate + L-serine. It participates in one-carbon metabolism; tetrahydrofolate interconversion. The protein operates within amino-acid biosynthesis; glycine biosynthesis; glycine from L-serine: step 1/1. Catalyzes the reversible interconversion of serine and glycine with tetrahydrofolate (THF) serving as the one-carbon carrier. This reaction serves as the major source of one-carbon groups required for the biosynthesis of purines, thymidylate, methionine, and other important biomolecules. Also exhibits THF-independent aldolase activity toward beta-hydroxyamino acids, producing glycine and aldehydes, via a retro-aldol mechanism. The sequence is that of Serine hydroxymethyltransferase 3 from Colwellia psychrerythraea (strain 34H / ATCC BAA-681) (Vibrio psychroerythus).